The primary structure comprises 318 residues: HPr kinase/phosphorylase (318 aa).

Residues histidine 146 and lysine 167 contribute to the active site. 161–168 (GESGLGKS) is a binding site for ATP. Serine 168 contributes to the Mg(2+) binding site. Aspartate 185 functions as the Proton acceptor; for phosphorylation activity. Proton donor; for dephosphorylation activity in the catalytic mechanism. Residues 209-218 (LEVRGIGLLD) form an important for the catalytic mechanism of both phosphorylation and dephosphorylation region. Residue glutamate 210 participates in Mg(2+) binding. Arginine 252 is an active-site residue. The interval 273–278 (QVVAGR) is important for the catalytic mechanism of dephosphorylation.

This sequence belongs to the HPrK/P family. In terms of assembly, homohexamer. Mg(2+) is required as a cofactor.

It carries out the reaction [HPr protein]-L-serine + ATP = [HPr protein]-O-phospho-L-serine + ADP + H(+). It catalyses the reaction [HPr protein]-O-phospho-L-serine + phosphate + H(+) = [HPr protein]-L-serine + diphosphate. Catalyzes the ATP- as well as the pyrophosphate-dependent phosphorylation of a specific serine residue in HPr, a phosphocarrier protein of the phosphoenolpyruvate-dependent sugar phosphotransferase system (PTS). HprK/P also catalyzes the pyrophosphate-producing, inorganic phosphate-dependent dephosphorylation (phosphorolysis) of seryl-phosphorylated HPr (P-Ser-HPr). The protein is HPr kinase/phosphorylase of Acidovorax sp. (strain JS42).